A 660-amino-acid polypeptide reads, in one-letter code: Iron(3+)-hydroxamate import system permease protein FhuB (660 aa).

A run of 18 helical transmembrane segments spans residues 5–25 (IALF…ALTW), 62–82 (LAIS…FQQV), 93–113 (LGVA…AIPG), 118–138 (QFAA…VAWG), 147–167 (ILAG…LVIF), 197–217 (QLLG…LMGL), 240–260 (AIVI…IGLF), 277–297 (LMLA…IILW), 303–323 (MEVS…LWLL), 348–368 (LAFA…ALSF), 391–411 (WPRI…GCII), 424–444 (VLGI…LVPG), 447–467 (FGWL…IIMI), 479–499 (MLLA…MLQA), 528–548 (GIVM…LTIL), 567–587 (IALL…IGPL), 607–627 (MPHI…ADWC), and 635–655 (FQIP…IYLL).

Belongs to the binding-protein-dependent transport system permease family. FecCD subfamily. The complex is composed of two ATP-binding proteins (FhuC), a transmembrane protein (FhuB) and a solute-binding protein (FhuD). FhuB interacts with FhuC. FhuB interacts with FhuD. FhuB binds substrate-loaded FhuD more strongly than FhuD alone.

The protein resides in the cell inner membrane. In terms of biological role, part of the ABC transporter complex FhuCDB involved in iron(3+)-hydroxamate import. Responsible for the translocation of the substrate across the membrane. The sequence is that of Iron(3+)-hydroxamate import system permease protein FhuB (fhuB) from Escherichia coli (strain K12).